Reading from the N-terminus, the 79-residue chain is Probable 26S proteasome complex subunit sem1 (79 aa).

Basic and acidic residues predominate over residues 1–21 (MSAPDKEKEKEKEETNNKSED). Residues 1-30 (MSAPDKEKEKEKEETNNKSEDLGLLEEDDE) form a disordered region. S19 carries the phosphoserine modification.

The protein belongs to the DSS1/SEM1 family. As to quaternary structure, part of the 26S proteasome.

Its function is as follows. Subunit of the 26S proteasome which plays a role in ubiquitin-dependent proteolysis. This Drosophila melanogaster (Fruit fly) protein is Probable 26S proteasome complex subunit sem1.